The primary structure comprises 266 residues: Protein crossbronx-like (266 aa).

The UBC core domain maps to 15-178 (KQGYHILAEY…VQEQAIASRN (164 aa)).

This sequence belongs to the ubiquitin-conjugating enzyme family. FTS subfamily.

The sequence is that of Protein crossbronx-like from Drosophila yakuba (Fruit fly).